Here is a 213-residue protein sequence, read N- to C-terminus: Nickel-cobalt-cadmium resistance protein NccN (213 aa).

4 consecutive transmembrane segments (helical) span residues isoleucine 24–glutamine 44, threonine 48–glycine 68, glutamate 113–isoleucine 133, and asparagine 180–alanine 200.

To A.eutrophus CzcN.

The protein localises to the cell inner membrane. Component of the NCC cation-efflux system that confers resistance to nickel, cobalt and cadmium. Appears to be involved in metal specificity but affects only nickel resistance. May be involved in nickel transport. The polypeptide is Nickel-cobalt-cadmium resistance protein NccN (nccN) (Alcaligenes xylosoxydans xylosoxydans (Achromobacter xylosoxidans)).